Reading from the N-terminus, the 207-residue chain is Small ribosomal subunit protein uS4 (207 aa).

A disordered region spans residues 31–53 (KAKFDSKPGQHGRTSGARTSDFG). Positions 97–157 (SRLDNVVYRM…EKSKKQARIV (61 aa)) constitute an S4 RNA-binding domain.

Belongs to the universal ribosomal protein uS4 family. In terms of assembly, part of the 30S ribosomal subunit. Contacts protein S5. The interaction surface between S4 and S5 is involved in control of translational fidelity.

In terms of biological role, one of the primary rRNA binding proteins, it binds directly to 16S rRNA where it nucleates assembly of the body of the 30S subunit. With S5 and S12 plays an important role in translational accuracy. In Paracidovorax citrulli (strain AAC00-1) (Acidovorax citrulli), this protein is Small ribosomal subunit protein uS4.